A 443-amino-acid chain; its full sequence is Probable glycine dehydrogenase (decarboxylating) subunit 1 (443 aa).

It belongs to the GcvP family. N-terminal subunit subfamily. The glycine cleavage system is composed of four proteins: P, T, L and H. In this organism, the P 'protein' is a heterodimer of two subunits.

It carries out the reaction N(6)-[(R)-lipoyl]-L-lysyl-[glycine-cleavage complex H protein] + glycine + H(+) = N(6)-[(R)-S(8)-aminomethyldihydrolipoyl]-L-lysyl-[glycine-cleavage complex H protein] + CO2. In terms of biological role, the glycine cleavage system catalyzes the degradation of glycine. The P protein binds the alpha-amino group of glycine through its pyridoxal phosphate cofactor; CO(2) is released and the remaining methylamine moiety is then transferred to the lipoamide cofactor of the H protein. The protein is Probable glycine dehydrogenase (decarboxylating) subunit 1 of Nitratidesulfovibrio vulgaris (strain ATCC 29579 / DSM 644 / CCUG 34227 / NCIMB 8303 / VKM B-1760 / Hildenborough) (Desulfovibrio vulgaris).